Consider the following 490-residue polypeptide: Bifunctional NAD(P)H-hydrate repair enzyme Nnr (490 aa).

Positions 1–204 (MKEIDELTIK…NIGHPVHLIN (204 aa)) constitute a YjeF N-terminal domain. Positions 1–204 (MKEIDELTIK…NIGHPVHLIN (204 aa)) are NAD(P)H-hydrate epimerase. The tract at residues 51–55 (NNGGD) is NADPHX 1; for epimerase activity. Residues N52 and D114 each coordinate K(+). The tract at residues 118 to 124 (GTGLRGE) is NADPHX 1; for epimerase activity. Residues Y129 and D147 each coordinate (6S)-NADPHX. Position 150 (S150) interacts with K(+). In terms of domain architecture, YjeF C-terminal spans 212–488 (TREMVRSLLP…RLIPEAIRRL (277 aa)). Residues 212–490 (TREMVRSLLP…IPEAIRRLKE (279 aa)) are ADP-dependent (S)-NAD(P)H-hydrate dehydratase. G317 provides a ligand contact to (6S)-NADPHX. The segment at 366-372 (HPGEMAR) is NADPHX 2; for dehydratase activity. ADP is bound by residues 402–406 (KSATT) and 421–430 (NTGLSKGGSG). Residue D431 coordinates (6S)-NADPHX.

In the N-terminal section; belongs to the NnrE/AIBP family. The protein in the C-terminal section; belongs to the NnrD/CARKD family. Requires K(+) as cofactor.

It carries out the reaction (6S)-NADHX + ADP = AMP + phosphate + NADH + H(+). The enzyme catalyses (6S)-NADPHX + ADP = AMP + phosphate + NADPH + H(+). The catalysed reaction is (6R)-NADHX = (6S)-NADHX. It catalyses the reaction (6R)-NADPHX = (6S)-NADPHX. Functionally, bifunctional enzyme that catalyzes the epimerization of the S- and R-forms of NAD(P)HX and the dehydration of the S-form of NAD(P)HX at the expense of ADP, which is converted to AMP. This allows the repair of both epimers of NAD(P)HX, a damaged form of NAD(P)H that is a result of enzymatic or heat-dependent hydration. The chain is Bifunctional NAD(P)H-hydrate repair enzyme Nnr (nnr) from Thermotoga maritima (strain ATCC 43589 / DSM 3109 / JCM 10099 / NBRC 100826 / MSB8).